Consider the following 340-residue polypeptide: Heat-inducible transcription repressor HrcA (340 aa).

The protein belongs to the HrcA family.

Its function is as follows. Negative regulator of class I heat shock genes (grpE-dnaK-dnaJ and groELS operons). Prevents heat-shock induction of these operons. This Burkholderia cenocepacia (strain HI2424) protein is Heat-inducible transcription repressor HrcA.